The following is a 23-amino-acid chain: Brevinin-1SE (23 aa).

Cysteine 17 and cysteine 23 are oxidised to a cystine.

Expressed by the skin glands.

The protein localises to the secreted. Mast cell degranulating peptide. Causes histamine release from rat peritoneal mast cells in vitro. Has antibacterial activity against the Gram-negative bacterium E.coli K12 and Gram-positive bacterium M.luteus NCT C2665. The polypeptide is Brevinin-1SE (Lithobates sevosus (Dusky gopher frog)).